Consider the following 179-residue polypeptide: Large ribosomal subunit protein uL5 (179 aa).

The protein belongs to the universal ribosomal protein uL5 family. As to quaternary structure, part of the 50S ribosomal subunit; part of the 5S rRNA/L5/L18/L25 subcomplex. Contacts the 5S rRNA and the P site tRNA. Forms a bridge to the 30S subunit in the 70S ribosome.

Functionally, this is one of the proteins that bind and probably mediate the attachment of the 5S RNA into the large ribosomal subunit, where it forms part of the central protuberance. In the 70S ribosome it contacts protein S13 of the 30S subunit (bridge B1b), connecting the 2 subunits; this bridge is implicated in subunit movement. Contacts the P site tRNA; the 5S rRNA and some of its associated proteins might help stabilize positioning of ribosome-bound tRNAs. The polypeptide is Large ribosomal subunit protein uL5 (Listeria innocua serovar 6a (strain ATCC BAA-680 / CLIP 11262)).